We begin with the raw amino-acid sequence, 416 residues long: Peptide chain release factor subunit 1 (416 aa).

It belongs to the eukaryotic release factor 1 family. As to quaternary structure, heterodimer of two subunits, one of which binds GTP.

It localises to the cytoplasm. Its function is as follows. Directs the termination of nascent peptide synthesis (translation) in response to the termination codons UAA, UAG and UGA. The chain is Peptide chain release factor subunit 1 from Halobacterium salinarum (strain ATCC 29341 / DSM 671 / R1).